We begin with the raw amino-acid sequence, 154 residues long: S-ribosylhomocysteine lyase (154 aa).

3 residues coordinate Fe cation: His57, His61, and Cys124.

This sequence belongs to the LuxS family. Homodimer. Fe cation is required as a cofactor.

It carries out the reaction S-(5-deoxy-D-ribos-5-yl)-L-homocysteine = (S)-4,5-dihydroxypentane-2,3-dione + L-homocysteine. Involved in the synthesis of autoinducer 2 (AI-2) which is secreted by bacteria and is used to communicate both the cell density and the metabolic potential of the environment. The regulation of gene expression in response to changes in cell density is called quorum sensing. Catalyzes the transformation of S-ribosylhomocysteine (RHC) to homocysteine (HC) and 4,5-dihydroxy-2,3-pentadione (DPD). This Exiguobacterium sibiricum (strain DSM 17290 / CCUG 55495 / CIP 109462 / JCM 13490 / 255-15) protein is S-ribosylhomocysteine lyase.